A 392-amino-acid chain; its full sequence is ATP phosphoribosyltransferase regulatory subunit (392 aa).

It belongs to the class-II aminoacyl-tRNA synthetase family. HisZ subfamily. In terms of assembly, heteromultimer composed of HisG and HisZ subunits.

It localises to the cytoplasm. It participates in amino-acid biosynthesis; L-histidine biosynthesis; L-histidine from 5-phospho-alpha-D-ribose 1-diphosphate: step 1/9. Required for the first step of histidine biosynthesis. May allow the feedback regulation of ATP phosphoribosyltransferase activity by histidine. The polypeptide is ATP phosphoribosyltransferase regulatory subunit (Prochlorococcus marinus (strain MIT 9303)).